The primary structure comprises 712 residues: Ribosomal RNA large subunit methyltransferase K/L (712 aa).

Positions 42 to 153 (QALRIVMWSR…KGRASLSIDL (112 aa)) constitute a THUMP domain.

Belongs to the methyltransferase superfamily. RlmKL family.

It localises to the cytoplasm. The enzyme catalyses guanosine(2445) in 23S rRNA + S-adenosyl-L-methionine = N(2)-methylguanosine(2445) in 23S rRNA + S-adenosyl-L-homocysteine + H(+). The catalysed reaction is guanosine(2069) in 23S rRNA + S-adenosyl-L-methionine = N(2)-methylguanosine(2069) in 23S rRNA + S-adenosyl-L-homocysteine + H(+). Functionally, specifically methylates the guanine in position 2445 (m2G2445) and the guanine in position 2069 (m7G2069) of 23S rRNA. This is Ribosomal RNA large subunit methyltransferase K/L from Stenotrophomonas maltophilia (strain K279a).